A 497-amino-acid chain; its full sequence is Protein FAM114A2 (497 aa).

A disordered region spans residues 1–54 (MSDKDPPESPVVTGVASTLKDENCEPVEKPEDKSQPVVSTRKRPETKPSSDLEA). The span at 19–34 (LKDENCEPVEKPEDKS) shows a compositional bias: basic and acidic residues. Phosphoserine is present on residues S84 and S205. Residues 344-364 (VAEKEEGEKESEAGNTEEAQK) are disordered.

The protein belongs to the FAM114 family.

This Mus musculus (Mouse) protein is Protein FAM114A2 (Fam114a2).